Here is a 337-residue protein sequence, read N- to C-terminus: 4-hydroxyproline 2-epimerase (337 aa).

Cys-91 functions as the Proton acceptor in the catalytic mechanism. Substrate contacts are provided by residues 92–93 (GH), Asp-252, and 257–258 (GT).

This sequence belongs to the proline racemase family.

It catalyses the reaction trans-4-hydroxy-L-proline = cis-4-hydroxy-D-proline. In terms of biological role, catalyzes the epimerization of trans-4-hydroxy-L-proline (t4LHyp) to cis-4-hydroxy-D-proline (c4DHyp). Is involved in a degradation pathway that converts t4LHyp to alpha-ketoglutarate, which allows R.sphaeroides to grow on t4LHyp as a sole carbon source. Displays no proline racemase activity. The sequence is that of 4-hydroxyproline 2-epimerase from Cereibacter sphaeroides (strain ATCC 17023 / DSM 158 / JCM 6121 / CCUG 31486 / LMG 2827 / NBRC 12203 / NCIMB 8253 / ATH 2.4.1.) (Rhodobacter sphaeroides).